A 587-amino-acid polypeptide reads, in one-letter code: Protein cereblon (587 aa).

Disordered regions lie at residues 1 to 56 (MDEE…PAEY), 78 to 113 (DVLQ…GLPN), and 157 to 195 (FSQE…IDIG). 2 stretches are compositionally biased toward polar residues: residues 22 to 31 (EDQSQSQGLQ) and 86 to 96 (SEGSHPSSDMS). Positions 159–168 (QERRRSRTSE) are enriched in basic and acidic residues. Residues 170–181 (TSQEEAAEEPDD) are compositionally biased toward acidic residues. Residues 182 to 191 (PPPQQPPLPP) show a composition bias toward pro residues. Positions 227–453 (HMLIFLHHHI…LIKSTFKDET (227 aa)) constitute a Lon N-terminal domain. The CULT domain maps to 452 to 561 (ETLFFCRYCN…LSGSSVRIGK (110 aa)). Residues cysteine 457, cysteine 460, cysteine 526, and cysteine 529 each contribute to the Zn(2+) site.

Belongs to the CRBN family. As to quaternary structure, likely a component of a DCX (DDB1-CUL4-X-box) protein ligase complex. May interact with pic/DDB1. Post-translationally, ubiquitinated.

The protein localises to the nucleus. Its pathway is protein modification; protein ubiquitination. Substrate recognition component of a DCX (DDB1-CUL4-X-box) E3 protein ligase complex that mediates the ubiquitination and subsequent proteasomal degradation of target proteins. Has an essential role in mediating growth by negatively regulating insulin signaling. It also has a role in maintaining presynaptic function in the neuromuscular junction synapses of third-instar larvae. This is Protein cereblon from Drosophila simulans (Fruit fly).